The sequence spans 203 residues: Probable proteasome subunit beta type-4 (203 aa).

Belongs to the peptidase T1B family. As to quaternary structure, the 26S proteasome consists of a 20S proteasome core and two 19S regulatory subunits. The 20S proteasome core is composed of 28 subunits that are arranged in four stacked rings, resulting in a barrel-shaped structure. The two end rings are each formed by seven alpha subunits, and the two central rings are each formed by seven beta subunits. The catalytic chamber with the active sites is on the inside of the barrel.

Its subcellular location is the cytoplasm. It localises to the nucleus. Non-catalytic component of the proteasome, a multicatalytic proteinase complex which is characterized by its ability to cleave peptides with Arg, Phe, Tyr, Leu, and Glu adjacent to the leaving group at neutral or slightly basic pH. The proteasome has an ATP-dependent proteolytic activity. This chain is Probable proteasome subunit beta type-4 (pcb-4), found in Neurospora crassa (strain ATCC 24698 / 74-OR23-1A / CBS 708.71 / DSM 1257 / FGSC 987).